Here is a 185-residue protein sequence, read N- to C-terminus: MKMIVGLGNPGQKYAGSKHNMGFMVVDGLAKRLNLTIDKLEFDAATATTRLNGEKIFLVKPQTFMNASGRAVRELMMFYQIQLDEIFVVQDDMDLTLGKLRLRKRGSAGGHNGIKDIISATGSDEFCRLKIGIQHPKRQRVVDWVLTPFSKTDQPLIDDAIEKADDALEDWLNGMPFDQLMNKFN.

Y14 is a binding site for tRNA. The active-site Proton acceptor is H19. 3 residues coordinate tRNA: F64, N66, and N112.

This sequence belongs to the PTH family. In terms of assembly, monomer.

It is found in the cytoplasm. The catalysed reaction is an N-acyl-L-alpha-aminoacyl-tRNA + H2O = an N-acyl-L-amino acid + a tRNA + H(+). Hydrolyzes ribosome-free peptidyl-tRNAs (with 1 or more amino acids incorporated), which drop off the ribosome during protein synthesis, or as a result of ribosome stalling. In terms of biological role, catalyzes the release of premature peptidyl moieties from peptidyl-tRNA molecules trapped in stalled 50S ribosomal subunits, and thus maintains levels of free tRNAs and 50S ribosomes. This is Peptidyl-tRNA hydrolase from Lacticaseibacillus paracasei (strain ATCC 334 / BCRC 17002 / CCUG 31169 / CIP 107868 / KCTC 3260 / NRRL B-441) (Lactobacillus paracasei).